Here is a 310-residue protein sequence, read N- to C-terminus: Malate dehydrogenase (310 aa).

Residues glycine 7–glycine 12 and aspartate 32 each bind NAD(+). Substrate contacts are provided by arginine 81 and arginine 87. Residues asparagine 94 and valine 117 to asparagine 119 contribute to the NAD(+) site. 2 residues coordinate substrate: asparagine 119 and arginine 150. The active-site Proton acceptor is histidine 174.

It belongs to the LDH/MDH superfamily. MDH type 3 family.

The catalysed reaction is (S)-malate + NAD(+) = oxaloacetate + NADH + H(+). Catalyzes the reversible oxidation of malate to oxaloacetate. This is Malate dehydrogenase from Chlorobium phaeobacteroides (strain DSM 266 / SMG 266 / 2430).